Here is an 81-residue protein sequence, read N- to C-terminus: Putative membrane protein insertion efficiency factor (81 aa).

A disordered region spans residues 61-81 (NPGGYDPVPPIPTSRSSSMAE).

Belongs to the UPF0161 family.

The protein localises to the cell inner membrane. In terms of biological role, could be involved in insertion of integral membrane proteins into the membrane. This Pseudomonas fluorescens (strain Pf0-1) protein is Putative membrane protein insertion efficiency factor.